The chain runs to 5104 residues: Malformin synthetase mlfA (5104 aa).

The tract at residues 225 to 616 (ERHAVNRPHS…CGRADTQVKL (392 aa)) is adenylation 1. Residues 757-830 (SRLEQEIQLA…EAASLAEVQE (74 aa)) form the Carrier 1 domain. Ser791 bears the O-(pantetheine 4'-phosphoryl)serine mark. The segment at 868-1299 (EDVFPCTTMQ…ALNTLSLLQA (432 aa)) is condensation 1. The adenylation 2 stretch occupies residues 1327-1716 (DRWVTRQPEG…GRKDTQVKLR (390 aa)). In terms of domain architecture, Carrier 2 spans 1854 to 1931 (TPASELERTL…QLAAEFGGPA (78 aa)). Ser1891 bears the O-(pantetheine 4'-phosphoryl)serine mark. 2 disordered regions span residues 1928 to 1961 (GGPA…DGVD) and 1998 to 2025 (TNKT…KVDS). Composition is skewed to low complexity over residues 1934–1958 (SASS…STND) and 2003–2013 (SVSSSSSSSSS). A condensation 2 region spans residues 2066–2481 (EDIYPATPLQ…TVSYSDKEAL (416 aa)). Positions 2504–2896 (VRTPHAPAVC…IGRRDGQLKL (393 aa)) are adenylation 3. The 77-residue stretch at 3032-3108 (RPVTSQEREM…QLICHLNTIR (77 aa)) folds into the Carrier 3 domain. Ser3069 bears the O-(pantetheine 4'-phosphoryl)serine mark. 2 condensation regions span residues 3125–3590 (WVAL…TYDQ) and 3611–4029 (NIYP…EQLV). The interval 4054–4444 (HSSREAVCAW…VGRKDNQIKF (391 aa)) is adenylation 4. The 77-residue stretch at 4578-4654 (MPSTAAERKM…DLSDQARSLI (77 aa)) folds into the Carrier 4 domain. An O-(pantetheine 4'-phosphoryl)serine modification is found at Ser4615. The tract at residues 4691–5018 (DVLPTTSFQR…LQTIVQHQNN (328 aa)) is condensation 5.

This sequence belongs to the NRP synthetase family.

It functions in the pathway secondary metabolite biosynthesis. Functionally, nonribosomal peptide synthetase; part of the gene cluster that mediates the biosynthesis of malformins, cyclic pentapeptides with a disulfide bond between 2 consecutive cysteins, that show potential anti-tumor as well as antimalarial and antitrypanosomal properties. The nonribosomal peptide synthetase mlfA is responsible of the formation of the cyclic pentapeptide. The malformin biosynthesis clusters in malformin-producing fungi also contain enzymes involved in the formation of the disulfide bond between the two consecutive cysteins within malformins, in addition to additional tailoring enzymes such as methyltransferases or oxidoreductases. They are also composed of up to 4 major facilitator superfamily transporters, and transcription factors probably involved in the regulation of the expression of those clusters. The chain is Malformin synthetase mlfA from Aspergillus vadensis (strain CBS 113365 / IMI 142717 / IBT 24658).